Reading from the N-terminus, the 296-residue chain is Glycine N-acyltransferase (296 aa).

Lys16 bears the N6-acetyllysine; alternate mark. Lys16 carries the post-translational modification N6-succinyllysine; alternate. At Lys113 the chain carries N6-acetyllysine. N6-acetyllysine; alternate is present on residues Lys127, Lys141, and Lys142. N6-succinyllysine; alternate is present on residues Lys127, Lys141, and Lys142. 2 positions are modified to N6-acetyllysine: Lys159 and Lys167. Lys169 is subject to N6-succinyllysine. 2 positions are modified to N6-acetyllysine; alternate: Lys183 and Lys256. An N6-succinyllysine; alternate mark is found at Lys183 and Lys256. An N6-succinyllysine modification is found at Lys267.

Belongs to the glycine N-acyltransferase family.

The protein localises to the mitochondrion. It carries out the reaction an acyl-CoA + glycine = an N-acylglycine + CoA + H(+). The catalysed reaction is benzoyl-CoA + glycine = N-benzoylglycine + CoA + H(+). Mitochondrial acyltransferase which transfers an acyl group to the N-terminus of glycine and glutamine, although much less efficiently. Can conjugate a multitude of substrates to form a variety of N-acylglycines, thereby detoxify xenobiotics, such as benzoic acid or salicylic acid, and endogenous organic acids, such as isovaleric acid. The sequence is that of Glycine N-acyltransferase (Glyat) from Mus musculus (Mouse).